The chain runs to 104 residues: Protein Rev (104 aa).

At serine 5 the chain carries Phosphoserine; by host CK2. The interval 18–26 (VIKILYQSN) is homomultimerization. The segment covering 25–34 (SNPYPNSKGT) has biased composition (polar residues). Disordered stretches follow at residues 25–48 (SNPY…WRAR) and 63–104 (CLGG…ATTE). The Nuclear localization signal and RNA-binding (RRE) motif lies at 34-50 (TRQARRNRRRRWRARQR). Positions 35 to 48 (RQARRNRRRRWRAR) are enriched in basic residues. Residues 67–77 (PPEPVDLPLPP) are compositionally biased toward pro residues. The Nuclear export signal and binding to XPO1 signature appears at 73–84 (LPLPPLDRLTLD). Positions 91–104 (TPGTESQQGTATTE) are enriched in polar residues.

The protein belongs to the HIV-1 REV protein family. Homomultimer; when bound to the RRE. Multimeric assembly is essential for activity and may involve XPO1. Binds to human KPNB1, XPO1, TNPO1, RANBP5 and IPO7. Interacts with the viral Integrase. Interacts with human KHDRBS1. Interacts with human NAP1; this interaction decreases Rev multimerization and stimulates its activity. Interacts with human DEAD-box helicases DDX3 and DDX24; these interactions may serve for viral RNA export to the cytoplasm and packaging, respectively. Interacts with human PSIP1; this interaction may inhibit HIV-1 DNA integration by promoting dissociation of the Integrase-LEDGF/p75 complex. Asymmetrically arginine dimethylated at one site by host PRMT6. Methylation impairs the RNA-binding activity and export of viral RNA from the nucleus to the cytoplasm. Post-translationally, phosphorylated by protein kinase CK2. Presence of, and maybe binding to the N-terminus of the regulatory beta subunit of CK2 is necessary for CK2-mediated Rev's phosphorylation.

The protein localises to the host nucleus. It is found in the host nucleolus. Its subcellular location is the host cytoplasm. Functionally, escorts unspliced or incompletely spliced viral pre-mRNAs (late transcripts) out of the nucleus of infected cells. These pre-mRNAs carry a recognition sequence called Rev responsive element (RRE) located in the env gene, that is not present in fully spliced viral mRNAs (early transcripts). This function is essential since most viral proteins are translated from unspliced or partially spliced pre-mRNAs which cannot exit the nucleus by the pathway used by fully processed cellular mRNAs. Rev itself is translated from a fully spliced mRNA that readily exits the nucleus. Rev's nuclear localization signal (NLS) binds directly to KPNB1/Importin beta-1 without previous binding to KPNA1/Importin alpha-1. KPNB1 binds to the GDP bound form of RAN (Ran-GDP) and targets Rev to the nucleus. In the nucleus, the conversion from Ran-GDP to Ran-GTP dissociates Rev from KPNB1 and allows Rev's binding to the RRE in viral pre-mRNAs. Rev multimerization on the RRE via cooperative assembly exposes its nuclear export signal (NES) to the surface. Rev can then form a complex with XPO1/CRM1 and Ran-GTP, leading to nuclear export of the complex. Conversion from Ran-GTP to Ran-GDP mediates dissociation of the Rev/RRE/XPO1/RAN complex, so that Rev can return to the nucleus for a subsequent round of export. Beside KPNB1, also seems to interact with TNPO1/Transportin-1, RANBP5/IPO5 and IPO7/RANBP7 for nuclear import. The nucleoporin-like HRB/RIP is an essential cofactor that probably indirectly interacts with Rev to release HIV RNAs from the perinuclear region to the cytoplasm. The polypeptide is Protein Rev (Human immunodeficiency virus type 1 group N (isolate YBF30) (HIV-1)).